We begin with the raw amino-acid sequence, 1134 residues long: MSNSNSKKPVANYAYRQQQDYNGMNAMVGNPMMYHPVDFVNGAGQYGPSQHPAYYTNSPLPNIPPTPFDTAYGASLFPSHLLMGSPFVSSPNMQSGYNSARSSNLKRKAYSRPVSNHNGYNGNSNSNQNNTNNGMVTPSNYYRMGRNSFSRNNNSTRNVTHNNNKGCDTRNNSGRRTFARNNIFDDILPEMLLQRPFCINYKVLPTGDDAYRTRSLLIENVDHSIDLHSIVKNFVKSNTLESAYLIEGGKSDDSKDVETKNLSILISFLTKGDCLNFYNNILQRLSEFKTFLKSEALNLKFVCLNYDPKCLPTFIESEALTENAEEADITNGSTMISASLHHNIANKDATRSIIIEFKSPVEKSDLFKKKLQFLDRSKNKRYILESIDLVNTDVPSNQFPENYAVLTFLNISMAIEVLDYLKKYSKNLGISKCFYVSLAPLVVSSARSSVANIYEGKTSTHRLSVPSVTAGNNNDSNNNGNNNKSNMSGITTLNNNSSIGVSVYGHSNMSLTSLSSSVSLNEEIDMLATKLQGVELDGTYLEINYRDYQTPTIEEHSTHLSNVKISKTTENSRQFSQDIPSPLPLNEHMFMNDSNQSNGAIIPQQLIATPSPVSPNLQMNQRVLPNPITQSLEQNFNVSAKVASSMGSDIGNRTIYIGNINPRSKAEDICNVVRGGILQSIKYIPEKKICFVTFIEAPSAVQFYANSFIDPIVLHGNMLRVGWGHYSGPLPKLISLAVTIGASRNVYVSLPEFAFKEKFIHDPQYKKLHETLSLPDAEQLREDFSTYGDIEQINYLSDSHCCWINFMNISSAISLVEEMNKESTVQNESGEVTLKRATEEKFGGRYKGLLINYGKDRCGNINKNLIAGKNSRFYKKVKRPSYNIRLSKLEEKRRQNEIDEKEKAFDKPLNLESLGISLDAHKDNGGGETGTANNTGHENESELEAENENGNETGSFGGLGLAVASSDVKRATSDETDYEDIFNKSSGSSDSSSDVEVIMHSPSDPEYALKSQTLRSSSQTVINSKRPVKIEDEEEAVGMSQLNYRSSLRQAPPRAPSTLSYNHSKNNETPMQDIFTNGETANNRKKKRGSFARHRTIPGSDVMAQYLAQVQHSTFMYAANILGASAEDNTHPDE.

The residue at position 2 (Ser-2) is an N-acetylserine. Disordered stretches follow at residues 112-133 (RPVSNHNGYNGNSNSNQNNTNN), 151-173 (RNNNSTRNVTHNNNKGCDTRNNS), and 464-491 (SVPSVTAGNNNDSNNNGNNNKSNMSGIT). 2 stretches are compositionally biased toward low complexity: residues 115-133 (SNHNGYNGNSNSNQNNTNN) and 151-164 (RNNNSTRNVTHNNN). Phosphoserine occurs at positions 464 and 467. Positions 471-489 (GNNNDSNNNGNNNKSNMSG) are enriched in low complexity. The 74-residue stretch at 653-726 (RTIYIGNINP…NMLRVGWGHY (74 aa)) folds into the RRM domain. Disordered stretches follow at residues 918 to 959 (LDAH…FGGL) and 1043 to 1092 (NYRS…GSFA). The segment covering 1057-1081 (STLSYNHSKNNETPMQDIFTNGETA) has biased composition (polar residues). Positions 1083 to 1092 (NRKKKRGSFA) are enriched in basic residues.

Its subcellular location is the cytoplasm. RNA-binding protein that associates with mRNAs encoding cell wall proteins. The polypeptide is RNA-binding protein NAB6 (NAB6) (Saccharomyces cerevisiae (strain ATCC 204508 / S288c) (Baker's yeast)).